A 93-amino-acid polypeptide reads, in one-letter code: Large ribosomal subunit protein eL42 (93 aa).

Zn(2+) contacts are provided by C11 and C14. Residues 11-75 (CPNCDEHHQL…TDLKYRCSEC (65 aa)) form a C4-type zinc finger. The interval 24–62 (KVRSGRSSGMKWDARRTKRANASIGNHGRFSKVPVGNKP) is disordered. Zn(2+) is bound by residues C72 and C75.

Belongs to the eukaryotic ribosomal protein eL42 family. As to quaternary structure, part of the 50S ribosomal subunit. It depends on Zn(2+) as a cofactor.

Binds to the 23S rRNA. This chain is Large ribosomal subunit protein eL42, found in Halobacterium salinarum (strain ATCC 700922 / JCM 11081 / NRC-1) (Halobacterium halobium).